The primary structure comprises 381 residues: Cytochrome b (381 aa).

Helical transmembrane passes span 34–54 (FGSL…FLAM), 78–99 (WLIR…YLHI), 114–134 (WNIG…GYVL), and 179–199 (FFAF…IHLL). Positions 84 and 98 each coordinate heme b. Heme b-binding residues include His183 and His197. A ubiquinone is bound at residue His202. The next 4 helical transmembrane spans lie at 227–247 (YKDL…ALFM), 289–309 (LGGV…PLLH), 321–341 (LTQI…WIGG), and 348–368 (FITV…IIMP).

This sequence belongs to the cytochrome b family. In terms of assembly, the cytochrome bc1 complex contains 3 respiratory subunits (MT-CYB, CYC1 and UQCRFS1), 2 core proteins (UQCRC1 and UQCRC2) and probably 6 low-molecular weight proteins. Heme b is required as a cofactor.

The protein resides in the mitochondrion inner membrane. In terms of biological role, component of the ubiquinol-cytochrome c reductase complex (complex III or cytochrome b-c1 complex) that is part of the mitochondrial respiratory chain. The b-c1 complex mediates electron transfer from ubiquinol to cytochrome c. Contributes to the generation of a proton gradient across the mitochondrial membrane that is then used for ATP synthesis. The polypeptide is Cytochrome b (mt-cyb) (Sphyrna tiburo vespertina (Pacific bonnethead shark)).